We begin with the raw amino-acid sequence, 356 residues long: 3-dehydroquinate synthase (356 aa).

NAD(+) is bound by residues 69–74 (DGEKFK), 103–107 (GVIGD), 127–128 (TT), Lys-140, Lys-149, and 167–170 (CLKT). Residues Glu-182, His-245, and His-262 each coordinate Zn(2+).

It belongs to the sugar phosphate cyclases superfamily. Dehydroquinate synthase family. Co(2+) serves as cofactor. It depends on Zn(2+) as a cofactor. NAD(+) is required as a cofactor.

It is found in the cytoplasm. The enzyme catalyses 7-phospho-2-dehydro-3-deoxy-D-arabino-heptonate = 3-dehydroquinate + phosphate. It functions in the pathway metabolic intermediate biosynthesis; chorismate biosynthesis; chorismate from D-erythrose 4-phosphate and phosphoenolpyruvate: step 2/7. Catalyzes the conversion of 3-deoxy-D-arabino-heptulosonate 7-phosphate (DAHP) to dehydroquinate (DHQ). This Psychromonas ingrahamii (strain DSM 17664 / CCUG 51855 / 37) protein is 3-dehydroquinate synthase.